Consider the following 400-residue polypeptide: Acetate kinase (400 aa).

Asparagine 7 is a Mg(2+) binding site. Lysine 14 contributes to the ATP binding site. Residue arginine 91 participates in substrate binding. Residue aspartate 148 is the Proton donor/acceptor of the active site. ATP-binding positions include 208-212, 283-285, and 331-335; these read HVGNG, DMR, and GVGEN. Glutamate 385 contributes to the Mg(2+) binding site.

Belongs to the acetokinase family. As to quaternary structure, homodimer. It depends on Mg(2+) as a cofactor. Requires Mn(2+) as cofactor.

The protein localises to the cytoplasm. The catalysed reaction is acetate + ATP = acetyl phosphate + ADP. Its pathway is metabolic intermediate biosynthesis; acetyl-CoA biosynthesis; acetyl-CoA from acetate: step 1/2. Functionally, catalyzes the formation of acetyl phosphate from acetate and ATP. Can also catalyze the reverse reaction. This chain is Acetate kinase, found in Parabacteroides distasonis (strain ATCC 8503 / DSM 20701 / CIP 104284 / JCM 5825 / NCTC 11152).